The primary structure comprises 150 residues: Cytochrome c-type biogenesis protein CcmE (150 aa).

Residues 1–7 (MTRKQKR) are Cytoplasmic-facing. Residues 8–28 (LAIIGGGVGFLTAAVLLVMFA) traverse the membrane as a helical; Signal-anchor for type II membrane protein segment. The Periplasmic segment spans residues 29–150 (FSQAVAYFYV…VTLGGKENIQ (122 aa)). The heme site is built by His-123 and Tyr-127.

This sequence belongs to the CcmE/CycJ family.

It is found in the cell inner membrane. Its function is as follows. Heme chaperone required for the biogenesis of c-type cytochromes. Transiently binds heme delivered by CcmC and transfers the heme to apo-cytochromes in a process facilitated by CcmF and CcmH. The protein is Cytochrome c-type biogenesis protein CcmE of Sinorhizobium fredii (strain NBRC 101917 / NGR234).